Reading from the N-terminus, the 208-residue chain is Probable nicotinate-nucleotide adenylyltransferase (208 aa).

This sequence belongs to the NadD family.

It catalyses the reaction nicotinate beta-D-ribonucleotide + ATP + H(+) = deamido-NAD(+) + diphosphate. Its pathway is cofactor biosynthesis; NAD(+) biosynthesis; deamido-NAD(+) from nicotinate D-ribonucleotide: step 1/1. Its function is as follows. Catalyzes the reversible adenylation of nicotinate mononucleotide (NaMN) to nicotinic acid adenine dinucleotide (NaAD). This is Probable nicotinate-nucleotide adenylyltransferase from Kineococcus radiotolerans (strain ATCC BAA-149 / DSM 14245 / SRS30216).